We begin with the raw amino-acid sequence, 479 residues long: Poly(A) polymerase catalytic subunit (479 aa).

Catalysis depends on residues Asp202 and Asp204. 3 residues coordinate Ca(2+): Asp202, Asp204, and Asp253.

This sequence belongs to the poxviridae poly(A) polymerase catalytic subunit family. In terms of assembly, heterodimer of a large (catalytic) subunit and a small (regulatory) subunit.

It carries out the reaction RNA(n) + ATP = RNA(n)-3'-adenine ribonucleotide + diphosphate. Its function is as follows. Polymerase that creates the 3'-poly(A) tail of mRNA's. In Bos taurus (Bovine), this protein is Poly(A) polymerase catalytic subunit (OPG063).